We begin with the raw amino-acid sequence, 647 residues long: Threonine--tRNA ligase (647 aa).

One can recognise a TGS domain in the interval 1–61 (MIKITFPDGA…TEDGSIEIVT (61 aa)). Residues 242–540 (DHRKLGKELD…LIENYKGAFP (299 aa)) are catalytic. Zn(2+) contacts are provided by C336, H387, and H517.

This sequence belongs to the class-II aminoacyl-tRNA synthetase family. As to quaternary structure, homodimer. Zn(2+) serves as cofactor.

It localises to the cytoplasm. The enzyme catalyses tRNA(Thr) + L-threonine + ATP = L-threonyl-tRNA(Thr) + AMP + diphosphate + H(+). In terms of biological role, catalyzes the attachment of threonine to tRNA(Thr) in a two-step reaction: L-threonine is first activated by ATP to form Thr-AMP and then transferred to the acceptor end of tRNA(Thr). Also edits incorrectly charged L-seryl-tRNA(Thr). The polypeptide is Threonine--tRNA ligase (Streptococcus gordonii (strain Challis / ATCC 35105 / BCRC 15272 / CH1 / DL1 / V288)).